The chain runs to 197 residues: Probable deoxycytidylate deaminase (197 aa).

A CMP/dCMP-type deaminase domain is found at 49-183 (KKHQRFLRIA…KMLDHARLPY (135 aa)). Zn(2+) is bound at residue His-117. The active-site Proton donor is the Glu-119. Positions 143 and 146 each coordinate Zn(2+).

Belongs to the cytidine and deoxycytidylate deaminase family. Zn(2+) is required as a cofactor.

It catalyses the reaction dCMP + H2O + H(+) = dUMP + NH4(+). In terms of biological role, supplies the nucleotide substrate for thymidylate synthetase. The chain is Probable deoxycytidylate deaminase from Caenorhabditis elegans.